We begin with the raw amino-acid sequence, 338 residues long: Glycerol-3-phosphate dehydrogenase [NAD(P)+] (338 aa).

NADPH contacts are provided by S13, W14, and K108. 3 residues coordinate sn-glycerol 3-phosphate: K108, G139, and S141. A143 is a binding site for NADPH. Sn-glycerol 3-phosphate is bound by residues K194, D247, S257, R258, and N259. K194 (proton acceptor) is an active-site residue. Position 258 (R258) interacts with NADPH. NADPH contacts are provided by V282 and E284.

It belongs to the NAD-dependent glycerol-3-phosphate dehydrogenase family.

It is found in the cytoplasm. The enzyme catalyses sn-glycerol 3-phosphate + NAD(+) = dihydroxyacetone phosphate + NADH + H(+). It catalyses the reaction sn-glycerol 3-phosphate + NADP(+) = dihydroxyacetone phosphate + NADPH + H(+). The protein operates within membrane lipid metabolism; glycerophospholipid metabolism. Its function is as follows. Catalyzes the reduction of the glycolytic intermediate dihydroxyacetone phosphate (DHAP) to sn-glycerol 3-phosphate (G3P), the key precursor for phospholipid synthesis. The protein is Glycerol-3-phosphate dehydrogenase [NAD(P)+] of Streptococcus pneumoniae (strain JJA).